A 274-amino-acid chain; its full sequence is GATA transcription factor 1 (274 aa).

Disordered regions lie at residues 1–39 (MEME…KTGL) and 102–132 (SPVS…TAVA). The Nuclear localization signal motif lies at 152–159 (KARSKRRR). A GATA-type zinc finger spans residues 190–244 (LIMGRKCQHCGAEKTPQWRAGPAGPKTLCNACGVRYKSGRLVPEYRPANSPTFTA).

This sequence belongs to the type IV zinc-finger family. Class A subfamily. Mostly expressed in roots. Also expressed in stems, flowers and leaves.

Its subcellular location is the nucleus. Its function is as follows. Transcriptional activator that specifically binds 5'-GATA-3' or 5'-GAT-3' motifs within gene promoters. May be involved in the regulation of some light-responsive genes. The chain is GATA transcription factor 1 (GATA1) from Arabidopsis thaliana (Mouse-ear cress).